The sequence spans 111 residues: uncharacterized protein (111 aa).

Transmembrane regions (helical) follow at residues 27–47 (IIVL…GYKF) and 80–100 (IFTG…ISAI).

It localises to the membrane. This is an uncharacterized protein from Acanthamoeba polyphaga (Amoeba).